Consider the following 273-residue polypeptide: Large ribosomal subunit protein uL2 (273 aa).

Positions 228–273 (VDHPHGGGEGKTSGGRHPVTPWGFPTKGKKTRKNKRTSKFIIKKRK) are disordered. The span at 254-273 (KGKKTRKNKRTSKFIIKKRK) shows a compositional bias: basic residues.

This sequence belongs to the universal ribosomal protein uL2 family. In terms of assembly, part of the 50S ribosomal subunit. Forms a bridge to the 30S subunit in the 70S ribosome.

In terms of biological role, one of the primary rRNA binding proteins. Required for association of the 30S and 50S subunits to form the 70S ribosome, for tRNA binding and peptide bond formation. It has been suggested to have peptidyltransferase activity; this is somewhat controversial. Makes several contacts with the 16S rRNA in the 70S ribosome. The chain is Large ribosomal subunit protein uL2 from Rickettsia bellii (strain OSU 85-389).